We begin with the raw amino-acid sequence, 276 residues long: NH(3)-dependent NAD(+) synthetase (276 aa).

43 to 50 (GISGGVDS) provides a ligand contact to ATP. Aspartate 49 is a binding site for Mg(2+). Arginine 146 lines the deamido-NAD(+) pocket. Threonine 166 is a binding site for ATP. Glutamate 171 provides a ligand contact to Mg(2+). Deamido-NAD(+) contacts are provided by lysine 179 and aspartate 186. Positions 195 and 217 each coordinate ATP. 266-267 (HK) contacts deamido-NAD(+).

It belongs to the NAD synthetase family. In terms of assembly, homodimer.

It catalyses the reaction deamido-NAD(+) + NH4(+) + ATP = AMP + diphosphate + NAD(+) + H(+). It functions in the pathway cofactor biosynthesis; NAD(+) biosynthesis; NAD(+) from deamido-NAD(+) (ammonia route): step 1/1. Functionally, catalyzes the ATP-dependent amidation of deamido-NAD to form NAD. Uses ammonia as a nitrogen source. The protein is NH(3)-dependent NAD(+) synthetase of Vibrio campbellii (strain ATCC BAA-1116).